Here is a 157-residue protein sequence, read N- to C-terminus: Cyclic pyranopterin monophosphate synthase (157 aa).

Substrate is bound by residues 74-76 and 112-113; these read MCH and ME. Residue aspartate 127 is part of the active site.

It belongs to the MoaC family. In terms of assembly, homohexamer; trimer of dimers.

The enzyme catalyses (8S)-3',8-cyclo-7,8-dihydroguanosine 5'-triphosphate = cyclic pyranopterin phosphate + diphosphate. It functions in the pathway cofactor biosynthesis; molybdopterin biosynthesis. Its function is as follows. Catalyzes the conversion of (8S)-3',8-cyclo-7,8-dihydroguanosine 5'-triphosphate to cyclic pyranopterin monophosphate (cPMP). This is Cyclic pyranopterin monophosphate synthase from Campylobacter jejuni subsp. jejuni serotype O:2 (strain ATCC 700819 / NCTC 11168).